Reading from the N-terminus, the 483-residue chain is Probable 4-aminobutyrate aminotransferase, mitochondrial (483 aa).

148-149 provides a ligand contact to pyridoxal 5'-phosphate; sequence GT. Arg-204 provides a ligand contact to substrate. Lys-341 is modified (N6-(pyridoxal phosphate)lysine). Residue Thr-365 coordinates pyridoxal 5'-phosphate.

The protein belongs to the class-III pyridoxal-phosphate-dependent aminotransferase family. As to quaternary structure, homodimer. The cofactor is pyridoxal 5'-phosphate.

Its subcellular location is the mitochondrion matrix. The catalysed reaction is 4-aminobutanoate + 2-oxoglutarate = succinate semialdehyde + L-glutamate. It carries out the reaction (S)-3-amino-2-methylpropanoate + 2-oxoglutarate = 2-methyl-3-oxopropanoate + L-glutamate. The sequence is that of Probable 4-aminobutyrate aminotransferase, mitochondrial (gta-1) from Caenorhabditis elegans.